The primary structure comprises 95 residues: Co-chaperonin GroES (95 aa).

This sequence belongs to the GroES chaperonin family. In terms of assembly, heptamer of 7 subunits arranged in a ring. Interacts with the chaperonin GroEL.

The protein resides in the cytoplasm. In terms of biological role, together with the chaperonin GroEL, plays an essential role in assisting protein folding. The GroEL-GroES system forms a nano-cage that allows encapsulation of the non-native substrate proteins and provides a physical environment optimized to promote and accelerate protein folding. GroES binds to the apical surface of the GroEL ring, thereby capping the opening of the GroEL channel. This is Co-chaperonin GroES from Bordetella avium (strain 197N).